Here is a 3164-residue protein sequence, read N- to C-terminus: Protein eyes shut homolog (3164 aa).

The N-terminal stretch at 1-21 is a signal peptide; that stretch reads MTDKSIIILSLMVFHSSFING. Residues N42, N105, N117, and N166 are each glycosylated (N-linked (GlcNAc...) asparagine). 3 EGF-like domains span residues 170–212, 213–254, and 256–292; these read KQQF…KYCQ, ELDA…KNCS, and IIGQCQPHVCFHGNCSNITSNSFICECDEQFSGPFCE. Intrachain disulfides connect C174-C189, C183-C200, C202-C211, C217-C228, C222-C242, C244-C253, C260-C270, C265-C280, and C282-C291. N225, N252, N269, and N272 each carry an N-linked (GlcNAc...) asparagine glycan. Residues N311 and N343 are each glycosylated (N-linked (GlcNAc...) asparagine). EGF-like domains follow at residues 332-368 and 370-406; these read DVSECSLVPCQNGTDCIQISNDVMCICSPIFTDLLCK and IQTSCESFSLRNNATCKKWEKDYHCSCISGFTEKNCE. 5 cysteine pairs are disulfide-bonded: C336–C347, C341–C356, C358–C367, C374–C385, and C396–C405. A glycan (N-linked (GlcNAc...) asparagine) is linked at N382. N506, N521, and N566 each carry an N-linked (GlcNAc...) asparagine glycan. An EGF-like 6 domain is found at 567-602; it reads TTDDQENECQHEAICKDEINRPRCSCSLSYIGRLCV. 2 disulfide bridges follow: C575–C590 and C592–C601. N-linked (GlcNAc...) asparagine glycans are attached at residues N611 and N654. Positions 643–679 constitute an EGF-like 7 domain; it reads DTEDCKSVSCKNGTTSIHLRGYFFCKCVPGFKGTQRE. Intrachain disulfides connect C652–C667, C685–C696, C690–C705, C707–C719, C737–C748, and C742–C757. An EGF-like 8; calcium-binding domain is found at 681–720; it reads DIDECASHPCKNGATCIDQPGNYFCQCVPPFKVVDGFSCL. An EGF-like 9; calcium-binding domain is found at 733-769; the sequence is DIDDCILNACEHNSTCKDLHLSYQCVCLSGWEGNFSE. N-linked (GlcNAc...) asparagine glycans are attached at residues N745, N766, N782, N783, and N805. The region spanning 771-807 is the EGF-like 10; calcium-binding domain; that stretch reads ESNECKMNPCKNNSTCIDLYKSYRCECTSGWTGQNCS. 33 disulfide bridges follow: C775–C786, C780–C795, C797–C806, C813–C824, C818–C835, C837–C846, C853–C866, C860–C876, C878–C887, C894–C905, C899–C914, C916–C925, C932–C943, C937–C952, C954–C963, C970–C981, C975–C990, C992–C1001, C1008–C1019, C1013–C1028, C1030–C1039, C1046–C1056, C1051–C1065, C1067–C1076, C1083–C1094, C1088–C1103, C1105–C1114, C1121–C1137, C1131–C1147, C1149–C1158, C1165–C1176, C1170–C1185, and C1187–C1196. EGF-like domains lie at 809–847, 849–888, and 890–926; these read EINECDSDPCMNGGLCHESTIPGQFVCLCPPLYTGRFCH, RYNPCDLLHNPCRNNSTCLALVDGNQHCICREEFEGKNCE, and DVKECLFLSCQDYGDCEDMVNNFRCICRPGFSGSLCE. Residues N862 and N863 are each glycosylated (N-linked (GlcNAc...) asparagine). Residues 928 to 964 enclose the EGF-like 14; calcium-binding domain; that stretch reads EINECSSEPCKNNGTCVDLTNRFFCNCEPGYHGPFCE. Residue N940 is glycosylated (N-linked (GlcNAc...) asparagine). The 37-residue stretch at 966-1002 folds into the EGF-like 15 domain; sequence DVNKCKISPCLDEENCVYRTDGYNCLCAPGYTGINCE. The region spanning 1004–1040 is the EGF-like 16; calcium-binding domain; it reads NLDECLSEPCLHDGVCIDGINHYTCDCKSGFFGTHCE. EGF-like domains lie at 1042–1077, 1079–1115, and 1117–1159; these read NANDCLSNPCLHGRCTELINEYPCSCDADGTSTQCK, KINDCTSIPCMNEGFCQKSAHGFTCICPRGYTGAYCE, and SIDN…QFCE. The region spanning 1161–1197 is the EGF-like 20; calcium-binding domain; it reads NINECSSSPCLHGADCEDHINGYVCKCQPGWSGHHCE. N-linked (GlcNAc...) asparagine glycosylation is found at N1509, N1522, N1906, N1941, N1960, and N2033. A Laminin G-like 1 domain is found at 1883 to 2063; it reads FSCVRYYGDS…AVKNYHINNC (181 aa). 4 disulfides stabilise this stretch: C2037–C2063, C2103–C2114, C2108–C2128, and C2130–C2139. Residues 2099–2140 form the EGF-like 21 domain; the sequence is APSVCQQDVCHNGGTCHPIFLSRGIVSFQCDCPLHFTGRFCE. One can recognise a Laminin G-like 2 domain in the interval 2145 to 2339; the sequence is LFFPSFNGNS…NIENCHVPWC (195 aa). N2170, N2185, and N2228 each carry an N-linked (GlcNAc...) asparagine glycan. 6 disulfides stabilise this stretch: C2308–C2339, C2339–C2350, C2344–C2359, C2375–C2386, C2380–C2396, and C2398–C2407. EGF-like domains lie at 2335–2368 and 2371–2408; these read HVPWCAHHLCRNNGTCISDNENLFCECPRLYSGK and QFASCENNPCGNGATCVPKSGTDIVCLCPYGRSGPLCT. N-linked (GlcNAc...) asparagine glycosylation occurs at N2347. N2412, N2453, N2484, N2506, and N2532 each carry an N-linked (GlcNAc...) asparagine glycan. A Laminin G-like 3 domain is found at 2419–2609; it reads SGTDAFGYTS…PNAGRSVGQC (191 aa). Cystine bridges form between C2576–C2609, C2614–C2625, and C2619–C2634. 2 consecutive EGF-like domains span residues 2610 to 2646 and 2648 to 2689; these read HASPCSLMKCGNGGTCIESGTSVYCNCTTGWKGAFCT and TVST…IYCE. N2635 carries an N-linked (GlcNAc...) asparagine glycan. Intrachain disulfides connect C2636-C2645, C2652-C2668, C2662-C2677, and C2679-C2688. A Laminin G-like 4 domain is found at 2717 to 2895; the sequence is DPSFRSNELS…AKGGSNVGDC (179 aa). N2775, N2800, and N2824 each carry an N-linked (GlcNAc...) asparagine glycan. Cystine bridges form between C2868/C2895, C2900/C2911, C2905/C2920, and C2922/C2931. EGF-like domains are found at residues 2896 to 2932 and 2933 to 2970; these read DGTACGYNTCRNGGECTVNGTTFSCRCLPDWAGNTCN and QSVYCLNNLCLHQSLCIPNQSFSYSCLCTLGWVGRYCE. N2914 carries an N-linked (GlcNAc...) asparagine glycan. N-linked (GlcNAc...) asparagine glycosylation occurs at N2932. 3 disulfides stabilise this stretch: C2937/C2948, C2942/C2958, and C2960/C2969. N-linked (GlcNAc...) asparagine glycosylation occurs at N2951. 6 N-linked (GlcNAc...) asparagine glycosylation sites follow: N2971, N3006, N3036, N3057, N3073, and N3082. Positions 2975–3164 constitute a Laminin G-like 5 domain; that stretch reads FSTAKFMGNS…YDGDEQNEVT (190 aa).

This sequence belongs to the EYS family.

The protein localises to the cell projection. The protein resides in the cilium. It is found in the photoreceptor outer segment. It localises to the cytoplasm. Its subcellular location is the cytoskeleton. The protein localises to the cilium axoneme. The protein resides in the microtubule organizing center. It is found in the centrosome. It localises to the secreted. Its subcellular location is the extracellular space. The protein localises to the extracellular matrix. The protein resides in the interphotoreceptor matrix. In terms of biological role, required to maintain the integrity of photoreceptor cells. Specifically required for normal morphology of the photoreceptor ciliary pocket, and might thus facilitate protein trafficking between the photoreceptor inner and outer segments via the transition zone. In Pongo abelii (Sumatran orangutan), this protein is Protein eyes shut homolog (EYS).